The sequence spans 674 residues: Probable L-type lectin-domain containing receptor kinase I.5 (674 aa).

Positions 1-22 are cleaved as a signal peptide; the sequence is MSKGLFLIWLISSFHLISFSTS. Topologically, residues 23–286 are extracellular; the sequence is SKDTSFVFNG…RPRAEHKKVQ (264 aa). The tract at residues 25-258 is legume-lectin like; it reads DTSFVFNGFG…YHYLLGWSFS (234 aa). N-linked (GlcNAc...) asparagine glycans are attached at residues N124, N181, N185, N204, and N225. The chain crosses the membrane as a helical span at residues 287–307; the sequence is FALIIALPVILAIVVMAVLAG. The Cytoplasmic portion of the chain corresponds to 308-674; that stretch reads VYYHRKKKYA…DHEQPLEFKS (367 aa). In terms of domain architecture, Protein kinase spans 344–625; the sequence is FHKDRFLGRG…LPLPDFSPYT (282 aa). Residues 350 to 358 and K372 each bind ATP; that span reads LGRGGFGEV. The active-site Proton acceptor is the D468. The span at 649 to 662 shows a compositional bias: low complexity; that stretch reads NWSAPSASSSSANN. The interval 649–674 is disordered; that stretch reads NWSAPSASSSSANNSKDHEQPLEFKS. The segment covering 663–674 has biased composition (basic and acidic residues); the sequence is SKDHEQPLEFKS.

It in the C-terminal section; belongs to the protein kinase superfamily. Ser/Thr protein kinase family. The protein in the N-terminal section; belongs to the leguminous lectin family.

It is found in the cell membrane. It carries out the reaction L-seryl-[protein] + ATP = O-phospho-L-seryl-[protein] + ADP + H(+). It catalyses the reaction L-threonyl-[protein] + ATP = O-phospho-L-threonyl-[protein] + ADP + H(+). In Arabidopsis thaliana (Mouse-ear cress), this protein is Probable L-type lectin-domain containing receptor kinase I.5 (LECRK15).